A 923-amino-acid chain; its full sequence is Neuropilin-1 (923 aa).

The signal sequence occupies residues 1-21 (MERGLPLLCATLALALALAGA). Over 22-856 (FRSDKCGGTI…PGNVLKTLDP (835 aa)) the chain is Extracellular. Cystine bridges form between cysteine 27-cysteine 54, cysteine 82-cysteine 104, and cysteine 147-cysteine 173. 2 CUB domains span residues 27–141 (CGGT…YEIF) and 147–265 (CSQN…YSVL). Asparagine 150 carries an N-linked (GlcNAc...) asparagine glycan. Ca(2+) is bound by residues glutamate 195, aspartate 209, and aspartate 250. A disulfide bridge links cysteine 206 with cysteine 228. Residues asparagine 261, asparagine 300, and asparagine 522 are each glycosylated (N-linked (GlcNAc...) asparagine). Intrachain disulfides connect cysteine 275–cysteine 424 and cysteine 431–cysteine 583. 2 F5/8 type C domains span residues 275 to 424 (CMEA…VYGC) and 431 to 583 (CSGM…LLGC). A glycan (O-linked (Xyl...) (chondroitin sulfate) serine; alternate) is linked at serine 612. The O-linked (Xyl...) (heparan sulfate) serine; alternate glycan is linked to serine 612. In terms of domain architecture, MAM spans 645–811 (TYGFNCEFGW…NHISQEDCAK (167 aa)). The segment at 820–845 (TEIKIDETGSTPGYEGEGEGDKNISR) is disordered. Residue serine 829 is glycosylated (O-linked (Xyl...) (chondroitin sulfate) serine). Asparagine 842 carries N-linked (GlcNAc...) asparagine glycosylation. Residues 857–879 (ILITIIAMSALGVLLGAVCGVVL) traverse the membrane as a helical segment. Topologically, residues 880–923 (YCACWHNGMSERNLSALENYNFELVDGVKLKKDKLNPQSNYSEA) are cytoplasmic. Serine 894 carries the post-translational modification Phosphoserine.

This sequence belongs to the neuropilin family. In terms of assembly, homodimer, and heterodimer with NRP2. Binds PLXNB1. Interacts with FER. Interacts with VEGFA. Interacts with ABCB8/MITOSUR in mitochondria. As to expression, nervous system.

It localises to the mitochondrion membrane. The protein localises to the cell membrane. Its subcellular location is the cytoplasm. Functionally, receptor involved in the development of the cardiovascular system, in angiogenesis, in the formation of certain neuronal circuits and in organogenesis outside the nervous system. Mediates the chemorepulsant activity of semaphorins. Recognizes a C-end rule (CendR) motif R/KXXR/K on its ligands which causes cellular internalization and vascular leakage. Binds to semaphorin 3A (SEMA3A), the PLGF-2 isoform of PGF, the VEGF165 isoform of VEGFA and VEGFB. Coexpression with KDR results in increased VEGF165 binding to KDR as well as increased chemotaxis. Regulates VEGF-induced angiogenesis. Binding to VEGFA initiates a signaling pathway needed for motor neuron axon guidance and cell body migration, including for the caudal migration of facial motor neurons from rhombomere 4 to rhombomere 6 during embryonic development. Regulates mitochondrial iron transport via interaction with ABCB8/MITOSUR. The protein is Neuropilin-1 of Mus musculus (Mouse).